The sequence spans 194 residues: MGARDCTPLLLLLLSFLLFPLGLPVLGAPPRLICDSRVLERYILEAREAENATMGCAEGCSFSENITVPDTKVNFYAWKRMEVQQQALEVWQGLALLSEAIFRGQALLANASQPCEALRLHVDKAVSGLRSLTSLLRALGAQKEAIPLPDATPSAAPLRIFTVDALSKLFRIYSNFLRGKLTLYTGEACRRGDR.

Residues 1–27 form the signal peptide; that stretch reads MGARDCTPLLLLLLSFLLFPLGLPVLG. Disulfide bonds link Cys34/Cys189 and Cys56/Cys60. Asn51 is a glycosylation site (N-linked (GlcNAc...) asparagine). N-linked (GlcNAc...) asparagine glycans are attached at residues Asn65 and Asn110.

The protein belongs to the EPO/TPO family. In terms of tissue distribution, produced by kidney or liver of adult mammals and by liver of fetal or neonatal mammals.

It is found in the secreted. Hormone involved in the regulation of erythrocyte proliferation and differentiation and the maintenance of a physiological level of circulating erythrocyte mass. Binds to EPOR leading to EPOR dimerization and JAK2 activation thereby activating specific downstream effectors, including STAT1 and STAT3. This Ovis aries (Sheep) protein is Erythropoietin (EPO).